Consider the following 354-residue polypeptide: Uroporphyrinogen decarboxylase (354 aa).

Residues 27–31, aspartate 77, tyrosine 154, threonine 209, and histidine 327 each bind substrate; that span reads RQAGR.

The protein belongs to the uroporphyrinogen decarboxylase family. Homodimer.

It localises to the cytoplasm. It catalyses the reaction uroporphyrinogen III + 4 H(+) = coproporphyrinogen III + 4 CO2. The protein operates within porphyrin-containing compound metabolism; protoporphyrin-IX biosynthesis; coproporphyrinogen-III from 5-aminolevulinate: step 4/4. Functionally, catalyzes the decarboxylation of four acetate groups of uroporphyrinogen-III to yield coproporphyrinogen-III. This is Uroporphyrinogen decarboxylase from Escherichia coli O6:K15:H31 (strain 536 / UPEC).